Consider the following 449-residue polypeptide: Doublesex- and mab-3-related transcription factor A2 (449 aa).

Residues 57 to 104 (CARCRNHGVVSALKGHKRYCRWKDCMCAKCTLIAERQRVMAAQVALRR) constitute a DNA-binding region (DM). Residues 163 to 259 (FPKTQLSGST…PSPSSAASRH (97 aa)) form a disordered region. A compositionally biased stretch (polar residues) spans 166 to 187 (TQLSGSTTTQKSVGKPASTESD). Residues 230–240 (GSVSSLGSDSG) are compositionally biased toward low complexity. Positions 260–295 (MNAIDILTRVFPSHKRSVLELVLQGCGKDVVQAIEQ) constitute a DMA domain.

The protein belongs to the DMRT family. As to expression, expressed in brain and eye.

The protein localises to the nucleus. Its function is as follows. May be involved in sexual development. The protein is Doublesex- and mab-3-related transcription factor A2 (dmrta2) of Xiphophorus maculatus (Southern platyfish).